The sequence spans 946 residues: Bifunctional glutamine synthetase adenylyltransferase/adenylyl-removing enzyme (946 aa).

The interval 1 to 440 (MKPLSSPLQQ…VFNELIGDDE (440 aa)) is adenylyl removase. Positions 449–946 (SEQWRELWQD…ASWQKWLVEE (498 aa)) are adenylyl transferase.

Belongs to the GlnE family. Mg(2+) is required as a cofactor.

The enzyme catalyses [glutamine synthetase]-O(4)-(5'-adenylyl)-L-tyrosine + phosphate = [glutamine synthetase]-L-tyrosine + ADP. The catalysed reaction is [glutamine synthetase]-L-tyrosine + ATP = [glutamine synthetase]-O(4)-(5'-adenylyl)-L-tyrosine + diphosphate. Its function is as follows. Involved in the regulation of glutamine synthetase GlnA, a key enzyme in the process to assimilate ammonia. When cellular nitrogen levels are high, the C-terminal adenylyl transferase (AT) inactivates GlnA by covalent transfer of an adenylyl group from ATP to specific tyrosine residue of GlnA, thus reducing its activity. Conversely, when nitrogen levels are low, the N-terminal adenylyl removase (AR) activates GlnA by removing the adenylyl group by phosphorolysis, increasing its activity. The regulatory region of GlnE binds the signal transduction protein PII (GlnB) which indicates the nitrogen status of the cell. This is Bifunctional glutamine synthetase adenylyltransferase/adenylyl-removing enzyme from Escherichia coli O81 (strain ED1a).